The primary structure comprises 156 residues: Ribosomal RNA large subunit methyltransferase H (156 aa).

Residues L73, G104, and 123-128 (VSSLTL) each bind S-adenosyl-L-methionine.

The protein belongs to the RNA methyltransferase RlmH family. As to quaternary structure, homodimer.

It is found in the cytoplasm. The catalysed reaction is pseudouridine(1915) in 23S rRNA + S-adenosyl-L-methionine = N(3)-methylpseudouridine(1915) in 23S rRNA + S-adenosyl-L-homocysteine + H(+). Specifically methylates the pseudouridine at position 1915 (m3Psi1915) in 23S rRNA. This chain is Ribosomal RNA large subunit methyltransferase H, found in Paraburkholderia phymatum (strain DSM 17167 / CIP 108236 / LMG 21445 / STM815) (Burkholderia phymatum).